The primary structure comprises 395 residues: Succinate--CoA ligase [ADP-forming] subunit beta (395 aa).

Positions 9–240 (RDVFEKHGVP…AASADPLEAK (232 aa)) constitute an ATP-grasp domain. ATP is bound by residues K49, 56–58 (GRG), A98, and E103. N195 and D209 together coordinate Mg(2+). Substrate-binding positions include N260 and 322–324 (GIT).

The protein belongs to the succinate/malate CoA ligase beta subunit family. In terms of assembly, heterotetramer of two alpha and two beta subunits. Mg(2+) serves as cofactor.

The enzyme catalyses succinate + ATP + CoA = succinyl-CoA + ADP + phosphate. The catalysed reaction is GTP + succinate + CoA = succinyl-CoA + GDP + phosphate. It participates in carbohydrate metabolism; tricarboxylic acid cycle; succinate from succinyl-CoA (ligase route): step 1/1. Succinyl-CoA synthetase functions in the citric acid cycle (TCA), coupling the hydrolysis of succinyl-CoA to the synthesis of either ATP or GTP and thus represents the only step of substrate-level phosphorylation in the TCA. The beta subunit provides nucleotide specificity of the enzyme and binds the substrate succinate, while the binding sites for coenzyme A and phosphate are found in the alpha subunit. This Beutenbergia cavernae (strain ATCC BAA-8 / DSM 12333 / CCUG 43141 / JCM 11478 / NBRC 16432 / NCIMB 13614 / HKI 0122) protein is Succinate--CoA ligase [ADP-forming] subunit beta.